Reading from the N-terminus, the 154-residue chain is MAGKLQAHNIRIRTFIHATEDPEKVLEALETLFPEEISPKDVEFEVIETEGYFGNPILVVDAEIKHSRNIRKFLENLRGLLSKEDRKYLWEHAEEKVDETGTFYIRFDKQKAYLGEVKVSEGEDVIHVRIKVKAFPMKKEAVVKAVREWLEGED.

Homodimer in solution.

Its function is as follows. In vitro, binds efficiently double-stranded RNAs in a non-sequence specific manner. The chain is RNA-binding protein PAB1135 from Pyrococcus abyssi (strain GE5 / Orsay).